Here is a 433-residue protein sequence, read N- to C-terminus: Steroid hormone receptor ERR2 (433 aa).

A disordered region spans residues 1–38; it reads MSSDDRHLGSSCGSFIKTEPSSPSSGIDALSHHSPSGS. Residues 28 to 38 show a composition bias toward low complexity; that stretch reads DALSHHSPSGS. The segment at 93–211 is interaction with NANOG; it reads YMLNAIPKRL…SPPAKKPLTK (119 aa). Positions 100–186 form a DNA-binding region, nuclear receptor; that stretch reads KRLCLVCGDI…RVRGGRQKYK (87 aa). NR C4-type zinc fingers lie at residues 103 to 123 and 139 to 163; these read CLVCGDIASGYHYGVASCEAC and CPATNECEITKRRRKSCQACRFMKC. Residues 203 to 433 form an essential for ESRRB transcriptional activity and interaction with NCOA3 region; sequence PPAKKPLTKI…LFLEMLEAKV (231 aa). The 225-residue stretch at 208-432 folds into the NR LBD domain; it reads PLTKIVSYLL…KLFLEMLEAK (225 aa).

Belongs to the nuclear hormone receptor family. NR3 subfamily. In terms of assembly, binds DNA as a monomer. Interacts with NR0B1; represses ESRRB activity at the GATA6 promoter. Interacts with NANOG; reciprocally modulates their transcriptional activities and activates POU5F1 expression. Interacts with NCOA3; mediates the interaction between ESRRB and RNA polymerase II complexes and allows NCOA3 corecruitment to ESRRB, KLF4, NANOG, and SOX2 enhancer regions to trigger ESRRB-dependent gene activation involved in self-renewal and pluripotency. Interacts with KDM1A; co-occupes the core set of ESRRB targets including ELF5 and EOMES. Interacts with the multiprotein complex Integrator, at least composed of INTS1, INTS2, INTS3, INTS4, INTS5, INTS6, INTS7, INTS8, INTS9/RC74, INTS10, INTS11/CPSF3L and INTS12; ESRRB is probably not a core component of the integrator complex and associates to integrator via its interaction with INTS1 and INTS9; attracts the transcriptional machinery. Interacts with JARID2. Interacts with POU5F1; recruits ESRRB near the POU5F1-SOX2 element in the NANOG proximal promoter leading to activation of NANOG expression; the interaction is DNA independent. Interacts with NFE2L2; represses NFE2L2 transcriptional activity. Isoform 1 interacts with ESR1. Post-translationally, acetylated by PCAF/KAT2 (in vitro).

Its subcellular location is the nucleus. It is found in the cytoplasm. The protein resides in the chromosome. Functionally, transcription factor that binds a canonical ESRRB recognition (ERRE) sequence 5'TCAAGGTCA-3' localized on promoter and enhancer of targets genes regulating their expression or their transcription activity. Plays a role, in a LIF-independent manner, in maintainance of self-renewal and pluripotency of embryonic and trophoblast stem cells through different signaling pathways including FGF signaling pathway and Wnt signaling pathways. Involved in morula development (2-16 cells embryos) by acting as a regulator at the 8-cell stage. Upon FGF signaling pathway activation, interacts with KDM1A by directly binding to enhancer site of ELF5 and EOMES and activating their transcription leading to self-renewal of trophoblast stem cells. Also regulates expression of multiple rod-specific genes and is required for survival of this cell type. Plays a role as transcription factor activator of GATA6, NR0B1, POU5F1 and PERM1. Plays a role as transcription factor repressor of NFE2L2 transcriptional activity and ESR1 transcriptional activity. During mitosis remains bound to a subset of interphase target genes, including pluripotency regulators, through the canonical ESRRB recognition (ERRE) sequence, leading to their transcriptional activation in early G1 phase. Can coassemble on structured DNA elements with other transcription factors like SOX2, POU5F1, KDM1A and NCOA3 to trigger ESRRB-dependent gene activation. This mechanism, in the case of SOX2 corecruitment prevents the embryonic stem cells (ESCs) to epiblast stem cells (EpiSC) transition through positive regulation of NR0B1 that inhibits the EpiSC transcriptional program. Also plays a role inner ear development by controlling expression of ion channels and transporters and in early placentation. Transcription factor that binds a canonical ESRRB recognition (ERRE) sequence 5'TCAAGGTCA-3' localized on promoter and enhancer of targets genes regulating their expression or their transcription activity. Positively regulates ESR1 transcriptional activity upon E2 stimulation. The protein is Steroid hormone receptor ERR2 of Homo sapiens (Human).